The sequence spans 139 residues: Desampylase (139 aa).

The region spanning 6–139 (LSLAADARDS…EFRELSVAVE (134 aa)) is the MPN domain. The active-site Proton donor/acceptor is glutamate 31. Zn(2+) contacts are provided by histidine 88, histidine 90, and aspartate 101. The JAMM motif signature appears at 88–101 (HSHPESDPVPSATD).

This sequence belongs to the peptidase M67B family. In terms of assembly, monomer. Zn(2+) serves as cofactor.

It carries out the reaction an N(6)-[small archaeal modifier protein]-[protein]-L-lysine + H2O = a [protein]-L-lysine + a [small archaeal modifier protein].. With respect to regulation, inhibited by EDTA and N-ethylmaleimide (NEM) in vitro. In terms of biological role, metalloprotease that displays desampylase (DSAMP) activity, cleaving ubiquitin-like small archaeal modifier proteins (SAMP1, SAMP2 and SAMP3) from protein conjugates (isopeptide- and linear-linked). Thus, likely regulates sampylation and the pools of 'free' SAMP available for protein modification. Functions as a specific and not a general protease since it is unable to hydrolyze a variety of unmodified proteins otherwise hydrolyzed by proteinase K. The sequence is that of Desampylase from Haloferax volcanii (strain ATCC 29605 / DSM 3757 / JCM 8879 / NBRC 14742 / NCIMB 2012 / VKM B-1768 / DS2) (Halobacterium volcanii).